The chain runs to 535 residues: Beta-amylase (535 aa).

Positions 51, 91, and 99 each coordinate substrate. The Proton donor role is filled by Glu-184. Positions 293, 298, and 340 each coordinate substrate. Glu-378 functions as the Proton acceptor in the catalytic mechanism. Substrate is bound by residues 379-380 (NA) and Arg-418. A run of 3 repeats spans residues 489-499 (GPTGGMGGQAE), 500-510 (GPTCGMGGQVK), and 511-521 (GPTGGMGGQAE). A 4 X 11 AA tandem repeats region spans residues 489-532 (GPTGGMGGQAEGPTCGMGGQVKGPTGGMGGQAEDPTSGIGGELP). The tract at residues 513–535 (TGGMGGQAEDPTSGIGGELPATM) is disordered. The stretch at 522 to 532 (DPTSGIGGELP) is one 4; approximate repeat.

This sequence belongs to the glycosyl hydrolase 14 family. In terms of assembly, monomer.

It catalyses the reaction Hydrolysis of (1-&gt;4)-alpha-D-glucosidic linkages in polysaccharides so as to remove successive maltose units from the non-reducing ends of the chains.. This Hordeum vulgare (Barley) protein is Beta-amylase (BMY1).